Here is a 472-residue protein sequence, read N- to C-terminus: Tubulin gamma chain (472 aa).

Ala-142–Gly-148 serves as a coordination point for GTP.

It belongs to the tubulin family. In terms of assembly, component of the gamma-tubulin small complex (gamma-TuSC) composed of tubulin gamma chain, gamma-tubulin complex protein 2 (GCP2) and gamma-tubulin complex protein 3 (GCP3). Interacts with GCP2 and GCP3. Interacts with EB1.

It is found in the cytoplasm. The protein localises to the cytoskeleton. Its subcellular location is the flagellum axoneme. It localises to the flagellum basal body. The protein resides in the spindle. It is found in the microtubule organizing center. Its function is as follows. Tubulin is the major constituent of microtubules (Potential). The gamma chain is found at microtubule organizing centers (MTOC) such as the centrosome. Component of the gamma-tubulin small complex (gamma-TuSC) involved in microtubule nucleation for the formation of median bodies and in the biogenesis of flagella. Gamma-TuSC may be required for the correct positioning of EB1 within the trophozoites. This chain is Tubulin gamma chain, found in Giardia intestinalis (strain ATCC 50803 / WB clone C6) (Giardia lamblia).